A 214-amino-acid chain; its full sequence is Neurogenin-3 (214 aa).

The segment covering Met-1 to Thr-14 has biased composition (polar residues). The tract at residues Met-1–Asn-98 is disordered. A compositionally biased stretch (basic and acidic residues) spans Arg-15–Glu-26. Basic residues-rich tracts occupy residues Ala-57–Arg-70 and Lys-79–Ala-88. A bHLH domain is found at Ser-83–Leu-135.

Efficient DNA binding requires dimerization with another bHLH protein. Interacts with ATOH8.

It localises to the nucleus. Functionally, acts as a transcriptional regulator. Together with NKX2-2, initiates transcriptional activation of NEUROD1. Involved in neurogenesis. Also required for the specification of a common precursor of the 4 pancreatic endocrine cell types. The chain is Neurogenin-3 (NEUROG3) from Homo sapiens (Human).